The following is a 78-amino-acid chain: Exodeoxyribonuclease 7 small subunit (78 aa).

The protein belongs to the XseB family. In terms of assembly, heterooligomer composed of large and small subunits.

Its subcellular location is the cytoplasm. It carries out the reaction Exonucleolytic cleavage in either 5'- to 3'- or 3'- to 5'-direction to yield nucleoside 5'-phosphates.. Functionally, bidirectionally degrades single-stranded DNA into large acid-insoluble oligonucleotides, which are then degraded further into small acid-soluble oligonucleotides. The chain is Exodeoxyribonuclease 7 small subunit from Nocardia farcinica (strain IFM 10152).